Here is a 350-residue protein sequence, read N- to C-terminus: Paired box protein Pax-4 (350 aa).

Positions 5–131 (GISSMNQLGG…SSINRVLRAL (127 aa)) form a DNA-binding region, paired. Residues 8–64 (SMNQLGGLFVNGRPLPLDTRQQIVRLAVSGMRPCDISRILKVSNGCVSKILGRYYRT) are PAI subdomain. Residues 83–131 (PVVARIAQLKGECPALFAWEIQRQLCAEGLCTQDKTPSVSSINRVLRAL) form an RED subdomain region. Positions 153–172 (LTPHSGSETPRGTHPGTGHR) are disordered. Positions 170 to 229 (GHRNRTIFSPSQAEALEKEFQRGQYPDSVARGKLATATSLPEDTVRVWFSNRRAKWRRQE) form a DNA-binding region, homeobox. A transcription repression region spans residues 278–350 (CYQLCWATAP…ATPTHFSHWP (73 aa)).

The protein belongs to the paired homeobox family.

It is found in the nucleus. In terms of biological role, plays an important role in the differentiation and development of pancreatic islet beta cells. Transcriptional repressor that binds to a common element in the glucagon, insulin and somatostatin promoters. Competes with PAX6 for this same promoter binding site. Isoform 2 appears to be a dominant negative form antagonizing PAX4 transcriptional activity. The chain is Paired box protein Pax-4 (PAX4) from Homo sapiens (Human).